A 201-amino-acid polypeptide reads, in one-letter code: UPF0301 protein RHE_CH00966 (201 aa).

Belongs to the UPF0301 (AlgH) family.

The sequence is that of UPF0301 protein RHE_CH00966 from Rhizobium etli (strain ATCC 51251 / DSM 11541 / JCM 21823 / NBRC 15573 / CFN 42).